Consider the following 514-residue polypeptide: Cytochrome P450 monooxygenase nodJ (514 aa).

A helical transmembrane segment spans residues 2–24; the sequence is ELIVIIITLAFCILLYGTRWRAA. 3 N-linked (GlcNAc...) asparagine glycosylation sites follow: asparagine 144, asparagine 245, and asparagine 416. Cysteine 432 contributes to the heme binding site.

Belongs to the cytochrome P450 family. Requires heme as cofactor.

It localises to the membrane. It functions in the pathway secondary metabolite biosynthesis. Cytochrome P450 monooxygenase; part of the gene cluster that mediates the biosynthesis of the indole diterpenes nodulisporic acids (NA). Nodulisporic acid A (NAA) and its chemically modified derivatives are of particular significance because of their highly potent insecticidal activity against blood-feeding arthropods and lack of observable adverse effects on mammals, in particular the tremogenicity associated with the paspaline-derived IDTs is not observed. The geranylgeranyl diphosphate (GGPP) synthase ggs1, localized outside of the cluster, is proposed to catalyze the first step in nodulisporic acid biosynthesis via conversion of farnesyl pyrophosphate and isopentyl pyrophosphate into geranylgeranyl pyrophosphate (GGPP). Condensation of indole-3-glycerol phosphate with GGPP by the prenyl transferase nodC then forms 3-geranylgeranylindole (3-GGI). Epoxidation by the FAD-dependent monooxygenase nodM leads to a single-epoxidized-GGI that is substrate of the terpene cyclase nodB for cyclization to yield emindole SB. The terminal methyl carbon, C28, of emindole SB is then oxidized by the cytochrome P450 monooxygenase nodW to produce nodulisporic acid F (NAF), the pentacyclic core of NAA. NAF is converted to nodulisporic acid E (NAE) via prenylation. This step is probably performed by one of the indole diterpene prenyltransferases nodD1 or nodD2. Several oxidation steps performed by the FAD-linked oxidoreductase nodO and one of the cytochrome P450 monooxygenase nodR, nodX or nodZ further convert NAE to nodulisporic acid D (NAD). NAD is substrate of cytochrome P450 monooxygenase nodJ to produce the precursor of nodulisporic acid C (NAC), converted to NAC by one of the indole diterpene prenyltransferases nodD1 or nodD2. The FAD-dependent monooxygenase nodY2 then oxidizes NAC to nodulisporic acid B (NAB). Finally NAB is converted to NAA by one of the cytochrome P450 monooxygenases nodR, nodX or nodZ. This chain is Cytochrome P450 monooxygenase nodJ, found in Hypoxylon pulicicidum.